Reading from the N-terminus, the 323-residue chain is DNA primase small subunit PriS (323 aa).

Residues D97, D99, and D274 contribute to the active site.

Belongs to the eukaryotic-type primase small subunit family. As to quaternary structure, heterodimer of a small subunit (PriS) and a large subunit (PriL). It depends on Mg(2+) as a cofactor. The cofactor is Mn(2+).

Catalytic subunit of DNA primase, an RNA polymerase that catalyzes the synthesis of short RNA molecules used as primers for DNA polymerase during DNA replication. The small subunit contains the primase catalytic core and has DNA synthesis activity on its own. Binding to the large subunit stabilizes and modulates the activity, increasing the rate of DNA synthesis while decreasing the length of the DNA fragments, and conferring RNA synthesis capability. The DNA polymerase activity may enable DNA primase to also catalyze primer extension after primer synthesis. May also play a role in DNA repair. The sequence is that of DNA primase small subunit PriS from Methanothermobacter thermautotrophicus (strain ATCC 29096 / DSM 1053 / JCM 10044 / NBRC 100330 / Delta H) (Methanobacterium thermoautotrophicum).